The chain runs to 98 residues: DNA-binding protein Fis (98 aa).

The segment at residues 74–93 (QTRAALMMGINRGTLRKKLK) is a DNA-binding region (H-T-H motif).

The protein belongs to the transcriptional regulatory Fis family. As to quaternary structure, homodimer.

Functionally, activates ribosomal RNA transcription. Plays a direct role in upstream activation of rRNA promoters. The chain is DNA-binding protein Fis from Citrobacter koseri (strain ATCC BAA-895 / CDC 4225-83 / SGSC4696).